Consider the following 163-residue polypeptide: Nucleotide-binding protein CJE0423 (163 aa).

It belongs to the YajQ family.

Nucleotide-binding protein. In Campylobacter jejuni (strain RM1221), this protein is Nucleotide-binding protein CJE0423.